Consider the following 117-residue polypeptide: MEFGLSWVFLVAILKGVQCEVQLVESGGGLVQPGGSLRLSCAASGFTFSSYWMHWVRQAPGKGLVWVSRINSDGSSTSYADSVKGRFTISRDNAKNTLYLQMNSLRAEDTAVYYCAR.

The signal sequence occupies residues 1–19; that stretch reads MEFGLSWVFLVAILKGVQC. A framework-1 region spans residues 20-44; the sequence is EVQLVESGGGLVQPGGSLRLSCAAS. In terms of domain architecture, Ig-like spans 20–117; that stretch reads EVQLVESGGG…EDTAVYYCAR (98 aa). Cys41 and Cys115 are joined by a disulfide. Positions 45 to 52 are complementarity-determining-1; it reads GFTFSSYW. Residues 53-69 form a framework-2 region; the sequence is MHWVRQAPGKGLVWVSR. Residues 70-77 are complementarity-determining-2; sequence INSDGSST. The interval 78–115 is framework-3; it reads SYADSVKGRFTISRDNAKNTLYLQMNSLRAEDTAVYYC. Positions 116 to 117 are complementarity-determining-3; the sequence is AR.

In terms of assembly, immunoglobulins are composed of two identical heavy chains and two identical light chains; disulfide-linked.

It localises to the secreted. The protein resides in the cell membrane. Its function is as follows. V region of the variable domain of immunoglobulin heavy chains that participates in the antigen recognition. Immunoglobulins, also known as antibodies, are membrane-bound or secreted glycoproteins produced by B lymphocytes. In the recognition phase of humoral immunity, the membrane-bound immunoglobulins serve as receptors which, upon binding of a specific antigen, trigger the clonal expansion and differentiation of B lymphocytes into immunoglobulins-secreting plasma cells. Secreted immunoglobulins mediate the effector phase of humoral immunity, which results in the elimination of bound antigens. The antigen binding site is formed by the variable domain of one heavy chain, together with that of its associated light chain. Thus, each immunoglobulin has two antigen binding sites with remarkable affinity for a particular antigen. The variable domains are assembled by a process called V-(D)-J rearrangement and can then be subjected to somatic hypermutations which, after exposure to antigen and selection, allow affinity maturation for a particular antigen. This chain is Immunoglobulin heavy variable 3-74, found in Homo sapiens (Human).